The primary structure comprises 177 residues: Translation initiation factor IF-3 (177 aa).

It belongs to the IF-3 family. Monomer.

The protein localises to the cytoplasm. Functionally, IF-3 binds to the 30S ribosomal subunit and shifts the equilibrium between 70S ribosomes and their 50S and 30S subunits in favor of the free subunits, thus enhancing the availability of 30S subunits on which protein synthesis initiation begins. This Nostoc sp. (strain PCC 7120 / SAG 25.82 / UTEX 2576) protein is Translation initiation factor IF-3.